We begin with the raw amino-acid sequence, 316 residues long: tRNA dimethylallyltransferase (316 aa).

An ATP-binding site is contributed by 17–24; the sequence is GPTASGKT. A substrate-binding site is contributed by 19–24; sequence TASGKT. 3 interaction with substrate tRNA regions span residues 42 to 45, 166 to 170, and 247 to 252; these read DSAL, QRLSR, and RCVGYR.

This sequence belongs to the IPP transferase family. As to quaternary structure, monomer. Requires Mg(2+) as cofactor.

It carries out the reaction adenosine(37) in tRNA + dimethylallyl diphosphate = N(6)-dimethylallyladenosine(37) in tRNA + diphosphate. Functionally, catalyzes the transfer of a dimethylallyl group onto the adenine at position 37 in tRNAs that read codons beginning with uridine, leading to the formation of N6-(dimethylallyl)adenosine (i(6)A). This chain is tRNA dimethylallyltransferase, found in Salmonella schwarzengrund (strain CVM19633).